The chain runs to 514 residues: MSKKPTVLMILDGYGLNEKTEGNAIALAKKPVLDKLMKDYPFVKGNASGMAVGLPEGQMGNSEVGHLNMGAGRIVYQELTRITKEIQDGDFFENTQLIKAVENCKKNNTALHLFGLLSDGGVHSHITHLYGLLELAKRHGLENVYVHAFLDGRDTAPTSGKSFMEALEAKMAELGVGRIASVTGRYYVMDRDNRWDRVEKAYAALVDGEGVEAANAVEAVAASYAEGVNDEFVLPTVVVKDGKAIAPIKANDSIIFFNFRPDRAREITRAFCTDDFDGFVRKSGRLPLTYVCFSEYDVTIPNKSVAFEKVSITNTFGEYLAEHGKTQARIAETEKYAHVTFFFNGGVEAPNEGEDRILVNSPKVATYDLQPEMSANAVADKLVEAITSLKYDVIIVNFANPDMVGHTGISDAAIKAVEAVDACVGRAYDALLSVDGQMFICADHGNAEQLVDYTNGEPFTAHTTNPVPFILINYDDSYTLREGGCLADIIPTLIEMMKMEQPKEMTGKSLLIKK.

Residues aspartate 12 and serine 62 each coordinate Mn(2+). Serine 62 (phosphoserine intermediate) is an active-site residue. Substrate contacts are provided by residues histidine 123, 153–154 (RD), arginine 185, arginine 191, 260–263 (RPDR), and lysine 335. Residues aspartate 402, histidine 406, aspartate 443, histidine 444, and histidine 462 each coordinate Mn(2+).

It belongs to the BPG-independent phosphoglycerate mutase family. As to quaternary structure, monomer. Requires Mn(2+) as cofactor.

The enzyme catalyses (2R)-2-phosphoglycerate = (2R)-3-phosphoglycerate. It functions in the pathway carbohydrate degradation; glycolysis; pyruvate from D-glyceraldehyde 3-phosphate: step 3/5. Functionally, catalyzes the interconversion of 2-phosphoglycerate and 3-phosphoglycerate. This Lachnoclostridium phytofermentans (strain ATCC 700394 / DSM 18823 / ISDg) (Clostridium phytofermentans) protein is 2,3-bisphosphoglycerate-independent phosphoglycerate mutase.